Here is a 273-residue protein sequence, read N- to C-terminus: Dermonecrotic toxin LspaSicTox-alphaIA2iii (273 aa).

His-5 is a catalytic residue. Positions 25 and 27 each coordinate Mg(2+). His-41 acts as the Nucleophile in catalysis. 2 disulfide bridges follow: Cys-45/Cys-51 and Cys-47/Cys-190. Residue Asp-85 coordinates Mg(2+).

It belongs to the arthropod phospholipase D family. Class II subfamily. Mg(2+) serves as cofactor. In terms of tissue distribution, expressed by the venom gland.

It localises to the secreted. The catalysed reaction is an N-(acyl)-sphingosylphosphocholine = an N-(acyl)-sphingosyl-1,3-cyclic phosphate + choline. The enzyme catalyses an N-(acyl)-sphingosylphosphoethanolamine = an N-(acyl)-sphingosyl-1,3-cyclic phosphate + ethanolamine. It catalyses the reaction a 1-acyl-sn-glycero-3-phosphocholine = a 1-acyl-sn-glycero-2,3-cyclic phosphate + choline. It carries out the reaction a 1-acyl-sn-glycero-3-phosphoethanolamine = a 1-acyl-sn-glycero-2,3-cyclic phosphate + ethanolamine. Dermonecrotic toxins cleave the phosphodiester linkage between the phosphate and headgroup of certain phospholipids (sphingolipid and lysolipid substrates), forming an alcohol (often choline) and a cyclic phosphate. This toxin acts on sphingomyelin (SM). It may also act on ceramide phosphoethanolamine (CPE), lysophosphatidylcholine (LPC) and lysophosphatidylethanolamine (LPE), but not on lysophosphatidylserine (LPS), and lysophosphatidylglycerol (LPG). It acts by transphosphatidylation, releasing exclusively cyclic phosphate products as second products. Induces dermonecrosis, hemolysis, increased vascular permeability, edema, inflammatory response, and platelet aggregation. The chain is Dermonecrotic toxin LspaSicTox-alphaIA2iii from Loxosceles spadicea (Recluse spider).